Consider the following 380-residue polypeptide: Cytochrome b (380 aa).

The next 4 helical transmembrane spans lie at 33–53 (FGSL…FLAM), 77–98 (WLIR…YMHI), 113–133 (WNIG…GYVL), and 178–198 (FFAF…LHLL). His83 and His97 together coordinate heme b. His182 and His196 together coordinate heme b. His201 contributes to the a ubiquinone binding site. 4 consecutive transmembrane segments (helical) span residues 226 to 246 (YKDL…ALFA), 288 to 308 (LGGV…PILH), 320 to 340 (LTQF…WIGG), and 347 to 367 (FIII…VLSP).

Belongs to the cytochrome b family. As to quaternary structure, the cytochrome bc1 complex contains 3 respiratory subunits (MT-CYB, CYC1 and UQCRFS1), 2 core proteins (UQCRC1 and UQCRC2) and probably 6 low-molecular weight proteins. Requires heme b as cofactor.

The protein resides in the mitochondrion inner membrane. Its function is as follows. Component of the ubiquinol-cytochrome c reductase complex (complex III or cytochrome b-c1 complex) that is part of the mitochondrial respiratory chain. The b-c1 complex mediates electron transfer from ubiquinol to cytochrome c. Contributes to the generation of a proton gradient across the mitochondrial membrane that is then used for ATP synthesis. The sequence is that of Cytochrome b (mt-cyb) from Oncorhynchus mykiss (Rainbow trout).